A 156-amino-acid polypeptide reads, in one-letter code: ATP synthase subunit b (156 aa).

The helical transmembrane segment at 11–31 threads the bilayer; it reads AIAFVLFVLFCMKYVWPPIMA.

This sequence belongs to the ATPase B chain family. F-type ATPases have 2 components, F(1) - the catalytic core - and F(0) - the membrane proton channel. F(1) has five subunits: alpha(3), beta(3), gamma(1), delta(1), epsilon(1). F(0) has three main subunits: a(1), b(2) and c(10-14). The alpha and beta chains form an alternating ring which encloses part of the gamma chain. F(1) is attached to F(0) by a central stalk formed by the gamma and epsilon chains, while a peripheral stalk is formed by the delta and b chains.

The protein localises to the cell inner membrane. Its function is as follows. F(1)F(0) ATP synthase produces ATP from ADP in the presence of a proton or sodium gradient. F-type ATPases consist of two structural domains, F(1) containing the extramembraneous catalytic core and F(0) containing the membrane proton channel, linked together by a central stalk and a peripheral stalk. During catalysis, ATP synthesis in the catalytic domain of F(1) is coupled via a rotary mechanism of the central stalk subunits to proton translocation. Component of the F(0) channel, it forms part of the peripheral stalk, linking F(1) to F(0). In Cronobacter sakazakii (strain ATCC BAA-894) (Enterobacter sakazakii), this protein is ATP synthase subunit b.